The following is a 225-amino-acid chain: Leucyl/phenylalanyl-tRNA--protein transferase (225 aa).

The protein belongs to the L/F-transferase family.

The protein localises to the cytoplasm. The catalysed reaction is N-terminal L-lysyl-[protein] + L-leucyl-tRNA(Leu) = N-terminal L-leucyl-L-lysyl-[protein] + tRNA(Leu) + H(+). It carries out the reaction N-terminal L-arginyl-[protein] + L-leucyl-tRNA(Leu) = N-terminal L-leucyl-L-arginyl-[protein] + tRNA(Leu) + H(+). The enzyme catalyses L-phenylalanyl-tRNA(Phe) + an N-terminal L-alpha-aminoacyl-[protein] = an N-terminal L-phenylalanyl-L-alpha-aminoacyl-[protein] + tRNA(Phe). In terms of biological role, functions in the N-end rule pathway of protein degradation where it conjugates Leu, Phe and, less efficiently, Met from aminoacyl-tRNAs to the N-termini of proteins containing an N-terminal arginine or lysine. This Nitrobacter winogradskyi (strain ATCC 25391 / DSM 10237 / CIP 104748 / NCIMB 11846 / Nb-255) protein is Leucyl/phenylalanyl-tRNA--protein transferase.